Reading from the N-terminus, the 323-residue chain is SPbeta prophage-derived uncharacterized protein YorG (323 aa).

Positions 222 to 272 form a coiled coil; the sequence is TAENLEKAIIEAVERQEQAEGIVAVTYEEQKQNNASEELDFNSLMDQIKEI.

This is SPbeta prophage-derived uncharacterized protein YorG (yorG) from Bacillus subtilis (strain 168).